A 328-amino-acid polypeptide reads, in one-letter code: Peroxisomal adenine nucleotide transporter 1 (328 aa).

Transmembrane regions (helical) follow at residues 1 to 21 (MLTL…NIAV), 78 to 98 (TVTT…YTFI), 128 to 148 (LVLG…MAVV), 185 to 202 (LRTG…YASF), 226 to 246 (FILG…LIVA), and 277 to 297 (WKGV…LFAF). 3 Solcar repeats span residues 1 to 101 (MLTL…IRKS), 122 to 208 (PSTI…LKEV), and 220 to 304 (LSAV…LTKS).

This sequence belongs to the mitochondrial carrier (TC 2.A.29) family.

It localises to the peroxisome membrane. Adenine nucleotide transporter involved in the uniport of ATP and adenine nucleotide hetero-exchange transport between the cytosol and the peroxisomal lumen. This transport is accompanied by a proton transport from the peroxisomal lumen to the cytosol. Transport of ATP into the peroxisome is required for beta-oxidation of medium-chain fatty acids. Required for growth on medium-chain fatty acids, pH gradient formation in peroxisomes and for normal peroxisome proliferation. The chain is Peroxisomal adenine nucleotide transporter 1 (ANT1) from Saccharomyces cerevisiae (strain ATCC 204508 / S288c) (Baker's yeast).